The sequence spans 460 residues: Argininosuccinate lyase (460 aa).

The protein belongs to the lyase 1 family. Argininosuccinate lyase subfamily.

The protein resides in the cytoplasm. It carries out the reaction 2-(N(omega)-L-arginino)succinate = fumarate + L-arginine. It functions in the pathway amino-acid biosynthesis; L-arginine biosynthesis; L-arginine from L-ornithine and carbamoyl phosphate: step 3/3. The sequence is that of Argininosuccinate lyase from Limosilactobacillus fermentum (strain NBRC 3956 / LMG 18251) (Lactobacillus fermentum).